The following is a 339-amino-acid chain: tRNA N6-adenosine threonylcarbamoyltransferase (339 aa).

Histidine 112 and histidine 116 together coordinate Fe cation. Substrate is bound by residues 135–139, aspartate 168, glycine 181, and asparagine 273; that span reads LVSGG. Residue aspartate 301 participates in Fe cation binding.

It belongs to the KAE1 / TsaD family. It depends on Fe(2+) as a cofactor.

It localises to the cytoplasm. It catalyses the reaction L-threonylcarbamoyladenylate + adenosine(37) in tRNA = N(6)-L-threonylcarbamoyladenosine(37) in tRNA + AMP + H(+). Its function is as follows. Required for the formation of a threonylcarbamoyl group on adenosine at position 37 (t(6)A37) in tRNAs that read codons beginning with adenine. Is involved in the transfer of the threonylcarbamoyl moiety of threonylcarbamoyl-AMP (TC-AMP) to the N6 group of A37, together with TsaE and TsaB. TsaD likely plays a direct catalytic role in this reaction. This is tRNA N6-adenosine threonylcarbamoyltransferase from Coxiella burnetii (strain RSA 493 / Nine Mile phase I).